The primary structure comprises 341 residues: MATIKDVAKRANVSTTTVSHVINKTRFVAEETRNAVWAAIKELHYSPSAVARSLKVNHTKSIGLLATSSEAAYFAEIIEAVEKNCFQKGYTLILGNAWNNLEKQRAYLSMMAQKRVDGLLVMCSEYPEPLLAMLEEYRHIPMVVMDWGEAKADFTDAVIDNAFEGGYMAGRYLIERGHREIGVIPGPLERNTGAGRLVGFMKAMEEAMIKVPESWIVQGDFEPESGYRAMQQILSQPHRPTAVFCGGDIMAMGALCAADEMGLRVPQDVSLIGYDNVRNARYFTPALTTIHQPKDSLGETAFNMLLDRIVNKREEPQSIEVHPRLIERRSVADGPFRDYRR.

One can recognise an HTH lacI-type domain in the interval 2 to 56 (ATIKDVAKRANVSTTTVSHVINKTRFVAEETRNAVWAAIKELHYSPSAVARSLKV). Residues 4 to 23 (IKDVAKRANVSTTTVSHVIN) constitute a DNA-binding region (H-T-H motif). A DNA-binding region spans residues 48 to 56 (SAVARSLKV). Y73, R190, T192, F221, and D275 together coordinate hypoxanthine.

In terms of assembly, homodimer.

It participates in purine metabolism; purine nucleotide biosynthesis [regulation]. In terms of biological role, is the main repressor of the genes involved in the de novo synthesis of purine nucleotides, regulating purB, purC, purEK, purF, purHD, purL, purMN and guaBA expression. PurR is allosterically activated to bind its cognate DNA by binding the purine corepressors, hypoxanthine or guanine, thereby effecting transcription repression. The sequence is that of HTH-type transcriptional repressor PurR from Shigella sonnei (strain Ss046).